The chain runs to 236 residues: Uridylate kinase (236 aa).

ATP is bound at residue 10–13; it reads KLSG. A UMP-binding site is contributed by Gly52. 2 residues coordinate ATP: Gly53 and Arg57. UMP contacts are provided by residues Asp72 and 133–140; that span reads TGNPFFTT. Residues Thr160, Tyr166, and Asp169 each contribute to the ATP site.

It belongs to the UMP kinase family. Homohexamer.

It is found in the cytoplasm. The enzyme catalyses UMP + ATP = UDP + ADP. It functions in the pathway pyrimidine metabolism; CTP biosynthesis via de novo pathway; UDP from UMP (UMPK route): step 1/1. Its activity is regulated as follows. Inhibited by UTP. Catalyzes the reversible phosphorylation of UMP to UDP. The sequence is that of Uridylate kinase from Cupriavidus metallidurans (strain ATCC 43123 / DSM 2839 / NBRC 102507 / CH34) (Ralstonia metallidurans).